Consider the following 493-residue polypeptide: Xaa-Pro dipeptidase (493 aa).

Residue A2 is modified to N-acetylalanine. S167 bears the Phosphoserine mark. H255 is an a dipeptide binding site. Mn(2+)-binding residues include D276, D287, and H370. D287 contributes to the a dipeptide binding site. 2 residues coordinate a dipeptide: H377 and R398. E412 and E452 together coordinate Mn(2+).

This sequence belongs to the peptidase M24B family. Eukaryotic-type prolidase subfamily. As to quaternary structure, homodimer. It depends on Mn(2+) as a cofactor.

It carries out the reaction Xaa-L-Pro dipeptide + H2O = an L-alpha-amino acid + L-proline. In terms of biological role, dipeptidase that catalyzes the hydrolysis of dipeptides with a prolyl (Xaa-Pro) or hydroxyprolyl residue in the C-terminal position. The preferred dipeptide substrate is Gly-Pro, but other Xaa-Pro dipeptides, such as Ala-Pro, Met-Pro, Phe-Pro, Val-Pro and Leu-Pro, can be cleaved. Plays an important role in collagen metabolism because the high level of iminoacids in collagen. The protein is Xaa-Pro dipeptidase (PEPD) of Pongo abelii (Sumatran orangutan).